The following is a 445-amino-acid chain: UPF0210 protein Sez_0396 (445 aa).

It belongs to the UPF0210 family. Homodimer.

The protein is UPF0210 protein Sez_0396 of Streptococcus equi subsp. zooepidemicus (strain MGCS10565).